A 195-amino-acid polypeptide reads, in one-letter code: Nascent polypeptide-associated complex subunit alpha (195 aa).

Disordered stretches follow at residues 1-59 and 132-153; these read MTGS…SRSE and TREA…EEDS. Basic and acidic residues predominate over residues 7 to 16; it reads TRQKEVKEPQ. A compositionally biased stretch (acidic residues) spans 19–33; that stretch reads VSDDSDNEAVEQELT. Residues 47-59 are compositionally biased toward basic and acidic residues; sequence DHIDKQAKQSRSE. Positions 56 to 121 constitute an NAC-A/B domain; sequence SRSEKKARKL…AKIEDLTQHA (66 aa). The span at 142–153 shows a compositional bias: acidic residues; it reads EEDENEDVEEDS.

This sequence belongs to the NAC-alpha family. In terms of assembly, may be part of the nascent polypeptide-associated complex (NAC), which is a heterodimer of icd-2 and icd-1 (via NAC-A/B domains).

The protein resides in the cytoplasm. In terms of biological role, may prevent inappropriate targeting of non-secretory polypeptides to the endoplasmic reticulum (ER). Plays a role in the response to heat stress. The chain is Nascent polypeptide-associated complex subunit alpha from Caenorhabditis elegans.